Reading from the N-terminus, the 286-residue chain is MSVKDKLEIYLRLARMDRPIGTLLLMWPCLMALVLAAGGMPDLKVLVIFIIGVVVMRACGCIINDYADRKLDSHVERTKSRPLASGEVSVKEALTLFVVMGLIAFGLVLMLNPLVVQLSFVGIILTIIYPFTKRFTNMPQMFLGVVWSWSIPMAYAAQTGTVPAEAWWLFAANWCWTVAYDTMYAMVDRDDDLKVGIKSTAILFGKYDRQVIALFQLAALACFIIAGWAADRGLVYALGIITFVGFSLYQQKLIYGRERAPCFKAFLNNNWAGLSLFVALGVDYLV.

7 helical membrane-spanning segments follow: residues 20–40 (IGTLLLMWPCLMALVLAAGGM), 43–63 (LKVLVIFIIGVVVMRACGCII), 96–116 (LFVVMGLIAFGLVLMLNPLVV), 142–162 (FLGVVWSWSIPMAYAAQTGTV), 167–187 (WWLFAANWCWTVAYDTMYAMV), 210–230 (QVIALFQLAALACFIIAGWAA), and 234–254 (LVYALGIITFVGFSLYQQKLI).

Belongs to the UbiA prenyltransferase family. The cofactor is Mg(2+).

The protein resides in the cell inner membrane. The enzyme catalyses all-trans-octaprenyl diphosphate + 4-hydroxybenzoate = 4-hydroxy-3-(all-trans-octaprenyl)benzoate + diphosphate. It functions in the pathway cofactor biosynthesis; ubiquinone biosynthesis. Catalyzes the prenylation of para-hydroxybenzoate (PHB) with an all-trans polyprenyl group. Mediates the second step in the final reaction sequence of ubiquinone-8 (UQ-8) biosynthesis, which is the condensation of the polyisoprenoid side chain with PHB, generating the first membrane-bound Q intermediate 3-octaprenyl-4-hydroxybenzoate. The chain is 4-hydroxybenzoate octaprenyltransferase from Shewanella woodyi (strain ATCC 51908 / MS32).